The following is a 362-amino-acid chain: Chorismate synthase (362 aa).

Residue arginine 46 participates in NADP(+) binding. FMN contacts are provided by residues 122–124 (RSS), 238–239 (NA), glycine 278, 293–297 (KPTPS), and arginine 319.

It belongs to the chorismate synthase family. Homotetramer. The cofactor is FMNH2.

The enzyme catalyses 5-O-(1-carboxyvinyl)-3-phosphoshikimate = chorismate + phosphate. Its pathway is metabolic intermediate biosynthesis; chorismate biosynthesis; chorismate from D-erythrose 4-phosphate and phosphoenolpyruvate: step 7/7. Catalyzes the anti-1,4-elimination of the C-3 phosphate and the C-6 proR hydrogen from 5-enolpyruvylshikimate-3-phosphate (EPSP) to yield chorismate, which is the branch point compound that serves as the starting substrate for the three terminal pathways of aromatic amino acid biosynthesis. This reaction introduces a second double bond into the aromatic ring system. This chain is Chorismate synthase, found in Campylobacter jejuni (strain RM1221).